The sequence spans 429 residues: Endoglucanase type C (429 aa).

Positions 1–18 (MKSLSLILSALAVQVAVA) are cleaved as a signal peptide. Position 19 is a pyrrolidone carboxylic acid (Gln-19). 9 disulfides stabilise this stretch: Cys-36-Cys-42, Cys-66-Cys-88, Cys-78-Cys-84, Cys-156-Cys-383, Cys-190-Cys-213, Cys-194-Cys-212, Cys-233-Cys-252, Cys-241-Cys-246, and Cys-257-Cys-333. Residue Asn-74 is glycosylated (N-linked (GlcNAc...) asparagine). Glu-215 acts as the Nucleophile in catalysis. Residue Glu-220 is the Proton donor of the active site. 2 N-linked (GlcNAc...) asparagine glycosylation sites follow: Asn-265 and Asn-318.

This sequence belongs to the glycosyl hydrolase 7 (cellulase C) family.

It catalyses the reaction Endohydrolysis of (1-&gt;4)-beta-D-glucosidic linkages in cellulose, lichenin and cereal beta-D-glucans.. This is Endoglucanase type C from Fusarium oxysporum (Fusarium vascular wilt).